We begin with the raw amino-acid sequence, 614 residues long: Replication protein A 70 kDa DNA-binding subunit (614 aa).

Residues 112-178 form a disordered region; it reads GNPVPYNEGQ…SSVKTPGGTQ (67 aa). Polar residues-rich tracts occupy residues 120-130 and 158-178; these read GQGQQRSSAPT and PSNQ…GGTQ. Positions 194-278 form a DNA-binding region, OB; sequence WTICARVTQK…VKNDYEITFN (85 aa). The C4-type zinc finger occupies 478–500; sequence CPSQDCNKKVIDQQNGLYRCEKC.

This sequence belongs to the replication factor A protein 1 family. In terms of assembly, component of the heterotrimeric canonical replication protein A complex (RPA).

It localises to the nucleus. It is found in the PML body. Functionally, as part of the heterotrimeric replication protein A complex (RPA/RP-A), binds and stabilizes single-stranded DNA intermediates, that form during DNA replication or upon DNA stress. It prevents their reannealing and in parallel, recruits and activates different proteins and complexes involved in DNA metabolism. Thereby, it plays an essential role both in DNA replication and the cellular response to DNA damage. The sequence is that of Replication protein A 70 kDa DNA-binding subunit (RPA1) from Gallus gallus (Chicken).